Reading from the N-terminus, the 64-residue chain is Prokaryotic ubiquitin-like protein Pup (64 aa).

The interval M1–D37 is disordered. The interval S21–Y58 is ARC ATPase binding. Residues A23–E52 are a coiled coil. Q64 bears the Deamidated glutamine mark. Q64 participates in a covalent cross-link: Isoglutamyl lysine isopeptide (Gln-Lys) (interchain with K-? in acceptor proteins).

Belongs to the prokaryotic ubiquitin-like protein family. As to quaternary structure, strongly interacts with the proteasome-associated ATPase ARC through a hydrophobic interface; the interacting region of Pup lies in its C-terminal half. There is one Pup binding site per ARC hexamer ring. Post-translationally, is modified by deamidation of its C-terminal glutamine to glutamate by the deamidase Dop, a prerequisite to the subsequent pupylation process.

It participates in protein degradation; proteasomal Pup-dependent pathway. Its function is as follows. Protein modifier that is covalently attached to lysine residues of substrate proteins, thereby targeting them for proteasomal degradation. The tagging system is termed pupylation. The protein is Prokaryotic ubiquitin-like protein Pup of Mycobacterium tuberculosis (strain ATCC 25177 / H37Ra).